We begin with the raw amino-acid sequence, 90 residues long: uncharacterized protein (90 aa).

The segment at 53–90 is disordered; sequence WRARPDANDADTTSSSSSSETCTESDDSSDVPPARYAV. A compositionally biased stretch (low complexity) spans 63-74; it reads DTTSSSSSSETC.

This is an uncharacterized protein from Orgyia pseudotsugata (Douglas-fir tussock moth).